The primary structure comprises 608 residues: Putative multicopper oxidase GMC1 (608 aa).

3 Plastocyanin-like domains span residues 51–163, 243–374, and 421–548; these read INGY…LIVE, LING…ELYR, and ERTF…FEVP. Residues His-100, His-102, His-145, and His-147 each contribute to the Cu cation site. Positions 452, 455, 457, 530, 531, 532, and 536 each coordinate Cu cation.

Belongs to the multicopper oxidase family. Requires Cu cation as cofactor.

In terms of biological role, could be an iron transport multicopper oxidase, which is required for Fe(2+) high affinity uptake. May be required to oxidize Fe(2+) and release it from the transporter. Essential component of copper-dependent iron transport. Involved in meiotic prophase and synaptonemal complex (SC) assembly. The polypeptide is Putative multicopper oxidase GMC1 (GMC1) (Saccharomyces cerevisiae (strain ATCC 204508 / S288c) (Baker's yeast)).